The following is a 112-amino-acid chain: Nitrogen regulatory protein P-II (112 aa).

Position 51 is an O-UMP-tyrosine (Tyr-51).

This sequence belongs to the P(II) protein family. As to quaternary structure, homotrimer.

In nitrogen-limiting conditions, when the ratio of Gln to 2-ketoglutarate decreases, P-II is uridylylated to P-II-UMP. P-II-UMP allows the deadenylation of glutamine synthetase (GS), thus activating the enzyme. Conversely, in nitrogen excess P-II is deuridylated and promotes the adenylation of GS. P-II indirectly controls the transcription of the GS gene (glnA). P-II prevents NR-II-catalyzed conversion of NR-I to NR-I-phosphate, the transcriptional activator of glnA. When P-II is uridylylated to P-II-UMP, these events are reversed. The chain is Nitrogen regulatory protein P-II (glnB) from Rhizobium etli (strain ATCC 51251 / DSM 11541 / JCM 21823 / NBRC 15573 / CFN 42).